The chain runs to 1145 residues: Trafficking protein particle complex subunit 10 (1145 aa).

The protein belongs to the TMEM1 family. As to quaternary structure, part of the multisubunit TRAPP (transport protein particle) complex. Interacts with Shal (via C-terminal dendritic targeting motif). In terms of tissue distribution, co-expressed with Shal in the nervous system.

It localises to the golgi apparatus. Its subcellular location is the cis-Golgi network. The protein resides in the cell projection. It is found in the dendrite. The protein localises to the perikaryon. May play a role in vesicular transport from endoplasmic reticulum to Golgi. Has a role in one of the several mechanisms underlying dendritic localization of Shal channels. This chain is Trafficking protein particle complex subunit 10 (SIDL), found in Drosophila melanogaster (Fruit fly).